The primary structure comprises 668 residues: tRNA 5-methylaminomethyl-2-thiouridine biosynthesis bifunctional protein MnmC (668 aa).

Residues 1 to 245 (MKHYSIQPAN…KREMLCGVME (245 aa)) form a tRNA (mnm(5)s(2)U34)-methyltransferase region. The segment at 270–668 (IGGGIASALL…LLKGKAVKAG (399 aa)) is FAD-dependent cmnm(5)s(2)U34 oxidoreductase.

This sequence in the N-terminal section; belongs to the methyltransferase superfamily. tRNA (mnm(5)s(2)U34)-methyltransferase family. The protein in the C-terminal section; belongs to the DAO family. Requires FAD as cofactor.

The protein resides in the cytoplasm. It carries out the reaction 5-aminomethyl-2-thiouridine(34) in tRNA + S-adenosyl-L-methionine = 5-methylaminomethyl-2-thiouridine(34) in tRNA + S-adenosyl-L-homocysteine + H(+). Catalyzes the last two steps in the biosynthesis of 5-methylaminomethyl-2-thiouridine (mnm(5)s(2)U) at the wobble position (U34) in tRNA. Catalyzes the FAD-dependent demodification of cmnm(5)s(2)U34 to nm(5)s(2)U34, followed by the transfer of a methyl group from S-adenosyl-L-methionine to nm(5)s(2)U34, to form mnm(5)s(2)U34. This Escherichia coli O157:H7 protein is tRNA 5-methylaminomethyl-2-thiouridine biosynthesis bifunctional protein MnmC.